We begin with the raw amino-acid sequence, 1102 residues long: MPKRSDIQSVLVIGSGPIVIGQAAEFDYSGTQACRVLKAEGLRVILVNSNPATIMTDPEIADATYVEPITPEFVEKIIAKERPDALLPTLGGQTALNTAISMHDNGVLEKYGVELIGANVEAINKGEDRDLFKGVVEAVKEKIGYGESARSVICHSMDDVIAGVDTLGGYPVVVRPSFTMGGAGSGFAHDEEELRRIAGQGLTLSPTTEVLLEESILGWKEYELELMRDRNDNVVVVCSIENFDPMGVHTGDSITVAPAMTLTDREYQRLRDVGIAIIREVGVDTGGCNIQFAIDPTDGRVIVIEMNPRVSRSSALASKATGFPIAKIAAKLAVGYTLDEIPNDITEKTPASFEPTLDYVVVKAPRFAFEKFPSADSSLTTTMKSVGEAMAIGRNFTEALQKALRSLEKKGSQFAFTGPVGDKAELLAEAVRPTDGRINTVMQAIRAGATQEEVFDATKIDPWFVDQLFLIKEIADELASAERLDAGLIAEAKRHGFSDAQIGGIRGLREDVVREVRHALGIRPVYKTVDTCAAEFAAKTPYFYSSYDEESEVAPRTKPAVIILGSGPNRIGQGIEFDYSCVHASFALSDAGYETVMVNCNPETVSTDYDTSDRLYFEPLTLEDVLEIVHAESLAGPIAGVIVQLGGQTPLGLSQALKDNGVPVVGTSPEAIHAAEDRGAFGRVLAEAGLPAPKHGTATTFAEAKAIADEIGYPVLVRPSYVLGGRGMEIVYDETRLASYISESTEISPTRPVLVDRFLDDAIEIDVDALYDGTELYLGGVMEHIEEAGIHSGDSACALPPITLGGFDIKRLRASTEGIAKGVGVLGLINIQFALSGDILYVLEANPRASRTVPFTSKATAVPLAKAAARISLGATIAELRAEGLLPRTGDGGTLPLDAPISVKEAVMPWSRFRDIHGRGVDTVLGPEMRSTGEVMGIDSVFGTAYAKSQAGAYGPLPTAGRAFISVANRDKRSMIFPARELVAHGFELMATSGTAEVLKRNGINATVVRKQSEGTGPNGEKTIVQHIHDGEVDLIVNTPYGTGGRLDGYEIRTAAVARSVPCLTTVQALAAAVQGIDALNHGGVGVRSLQEHAEHLTAARD.

A carboxyphosphate synthetic domain region spans residues 1-408 (MPKRSDIQSV…ALQKALRSLE (408 aa)). The ATP site is built by R129, R175, G181, G182, E214, I216, E221, G247, V248, H249, Q291, and E305. Residues 137 to 334 (EAVKEKIGYG…IAKIAAKLAV (198 aa)) form the ATP-grasp 1 domain. Mg(2+)-binding residues include Q291, E305, and N307. 3 residues coordinate Mn(2+): Q291, E305, and N307. Residues 409 to 551 (KKGSQFAFTG…YFYSSYDEES (143 aa)) are oligomerization domain. A carbamoyl phosphate synthetic domain region spans residues 552–954 (EVAPRTKPAV…AYAKSQAGAY (403 aa)). Positions 682–873 (GRVLAEAGLP…LAKAAARISL (192 aa)) constitute an ATP-grasp 2 domain. ATP is bound by residues R718, R757, L759, E764, G789, I790, H791, S792, Q832, and E844. Residues Q832, E844, and N846 each coordinate Mg(2+). 3 residues coordinate Mn(2+): Q832, E844, and N846. The 146-residue stretch at 955-1100 (GPLPTAGRAF…QEHAEHLTAA (146 aa)) folds into the MGS-like domain. Residues 955–1102 (GPLPTAGRAF…HAEHLTAARD (148 aa)) form an allosteric domain region.

Belongs to the CarB family. Composed of two chains; the small (or glutamine) chain promotes the hydrolysis of glutamine to ammonia, which is used by the large (or ammonia) chain to synthesize carbamoyl phosphate. Tetramer of heterodimers (alpha,beta)4. The cofactor is Mg(2+). Mn(2+) serves as cofactor.

It carries out the reaction hydrogencarbonate + L-glutamine + 2 ATP + H2O = carbamoyl phosphate + L-glutamate + 2 ADP + phosphate + 2 H(+). It catalyses the reaction hydrogencarbonate + NH4(+) + 2 ATP = carbamoyl phosphate + 2 ADP + phosphate + 2 H(+). Its pathway is amino-acid biosynthesis; L-arginine biosynthesis; carbamoyl phosphate from bicarbonate: step 1/1. It functions in the pathway pyrimidine metabolism; UMP biosynthesis via de novo pathway; (S)-dihydroorotate from bicarbonate: step 1/3. In terms of biological role, large subunit of the glutamine-dependent carbamoyl phosphate synthetase (CPSase). CPSase catalyzes the formation of carbamoyl phosphate from the ammonia moiety of glutamine, carbonate, and phosphate donated by ATP, constituting the first step of 2 biosynthetic pathways, one leading to arginine and/or urea and the other to pyrimidine nucleotides. The large subunit (synthetase) binds the substrates ammonia (free or transferred from glutamine from the small subunit), hydrogencarbonate and ATP and carries out an ATP-coupled ligase reaction, activating hydrogencarbonate by forming carboxy phosphate which reacts with ammonia to form carbamoyl phosphate. This chain is Carbamoyl phosphate synthase large chain, found in Streptomyces griseus subsp. griseus (strain JCM 4626 / CBS 651.72 / NBRC 13350 / KCC S-0626 / ISP 5235).